Consider the following 388-residue polypeptide: P2X purinoceptor 4 (388 aa).

The Cytoplasmic segment spans residues 1 to 33 (MTGCCTVLGAFLFEYDTPRIVLIRSRKVGLMNR). A helical membrane pass occupies residues 34-54 (TVQLLILAYVIGWVFVWEKGY). Residues 55–338 (QETDSVVSSV…KFDIIPTMIN (284 aa)) lie on the Extracellular side of the membrane. ATP is bound by residues Lys67 and Lys69. CTP is bound by residues Lys67 and Lys69. Residues Asn75, Asn110, Asn131, Asn153, and Asn184 are each glycosylated (N-linked (GlcNAc...) asparagine). Disulfide bonds link Cys116–Cys165, Cys126–Cys149, and Cys132–Cys159. The ATP site is built by Thr186 and Leu188. Thr186 lines the CTP pocket. 2 N-linked (GlcNAc...) asparagine glycosylation sites follow: Asn199 and Asn208. 2 cysteine pairs are disulfide-bonded: Cys217-Cys227 and Cys261-Cys270. The ATP site is built by Asn293, Arg295, and Lys313. 3 residues coordinate CTP: Asn293, Arg295, and Lys313. Residues 339–359 (IGSGLALLGVATVLCDVIVLY) traverse the membrane as a helical segment. Over 360-388 (CMKKRYYYREKKYKYVEDYEQGLGNQMEQ) the chain is Cytoplasmic.

The protein belongs to the P2X receptor family. In terms of assembly, functional P2RXs are organized as homomeric and heteromeric trimers. Forms heterotrimer with P2RX1. Interacts with P2RX7 (via C-terminus); this interaction is functional only in the presence of ATP. Forms heterotrimer with P2RX4; functional differences between homomeric P2RX4 and P2RX4/6 heterotrimer are minor. Interacts with AP1M2.

The protein resides in the cell membrane. It localises to the lysosome membrane. The catalysed reaction is K(+)(in) = K(+)(out). The enzyme catalyses Na(+)(in) = Na(+)(out). It catalyses the reaction Ca(2+)(in) = Ca(2+)(out). With respect to regulation, activated by ATP. pH-dependent and inhibited by acidic pH. Functionally, ATP-gated nonselective transmembrane cation channel permeable to potassium, sodium and calcium. CTP, but not GTP or UTP, functions as a weak affinity agonist for P2RX4. Activated by extracellularly released ATP, it plays multiple role in immunity and central nervous system physiology. Could also function as an ATP-gated cation channel of lysosomal membranes. The sequence is that of P2X purinoceptor 4 (P2RX4) from Bos taurus (Bovine).